A 1235-amino-acid polypeptide reads, in one-letter code: DNA polymerase (1235 aa).

The region spanning 773–887 (LLGYYISSGD…LILLLNSIGV (115 aa)) is the DOD-type homing endonuclease domain.

Belongs to the DNA polymerase type-B family. In terms of processing, this protein undergoes a protein self splicing that involves a post-translational excision of the intervening region (intein) followed by peptide ligation.

It catalyses the reaction DNA(n) + a 2'-deoxyribonucleoside 5'-triphosphate = DNA(n+1) + diphosphate. The sequence is that of DNA polymerase (pol) from Pyrococcus horikoshii (strain ATCC 700860 / DSM 12428 / JCM 9974 / NBRC 100139 / OT-3).